Reading from the N-terminus, the 320-residue chain is Retron Ec86 reverse transcriptase (320 aa).

The 215-residue stretch at 34–248 (VETLRLLIYT…SQRKVTGLVI (215 aa)) folds into the Reverse transcriptase domain. Residues Asp119, Asp197, and Asp198 each contribute to the Mg(2+) site. The interval 230 to 320 (KKTCISGPRS…GKNPLNKAKT (91 aa)) is necessary and required for recognition and binding of RNA.

This sequence belongs to the bacterial reverse transcriptase family.

The enzyme catalyses DNA(n) + a 2'-deoxyribonucleoside 5'-triphosphate = DNA(n+1) + diphosphate. Functionally, reverse transcriptase (RT) component of antiviral defense system retron Ec86, composed of a non-coding RNA (ncRNA), a ribosyltransferase/DNA-binding protein and this RT. Expression of the 3-gene retron confers protection against bacteriophage T5. At multiplicity of infection (MOI) of 0.02 cultures grow normally when infected with T5 without collapsing, at MOI 2 cultures enter growth stasis. Responsible for synthesis of msDNA (a branched molecule with RNA linked by a 2',5'-phosphodiester bond to ssDNA). The retron transcript serves as primer (from a conserved internal G residue) and template for the reaction, and codes for the RT. Recognizes only its cognate RNA as a primer template. Overexpression of the ncRNA and RT (without the ribosyltransferase), which leads to increased levels of msDNA, is mutagenic in vivo. This may be due to a mismatch in the msDNA stem which binds and sequesters MutS and/or MutL. The chain is Retron Ec86 reverse transcriptase from Escherichia coli.